The primary structure comprises 701 residues: Elongation factor G (701 aa).

One can recognise a tr-type G domain in the interval asparagine 11–leucine 287. Residues alanine 20–threonine 27, aspartate 84–histidine 88, and asparagine 138–aspartate 141 each bind GTP.

Belongs to the TRAFAC class translation factor GTPase superfamily. Classic translation factor GTPase family. EF-G/EF-2 subfamily.

The protein resides in the cytoplasm. Functionally, catalyzes the GTP-dependent ribosomal translocation step during translation elongation. During this step, the ribosome changes from the pre-translocational (PRE) to the post-translocational (POST) state as the newly formed A-site-bound peptidyl-tRNA and P-site-bound deacylated tRNA move to the P and E sites, respectively. Catalyzes the coordinated movement of the two tRNA molecules, the mRNA and conformational changes in the ribosome. The protein is Elongation factor G of Mycobacterium sp. (strain JLS).